A 348-amino-acid polypeptide reads, in one-letter code: UDP-3-O-acylglucosamine N-acyltransferase (348 aa).

The Proton acceptor role is filled by His-257.

Belongs to the transferase hexapeptide repeat family. LpxD subfamily. In terms of assembly, homotrimer.

It carries out the reaction a UDP-3-O-[(3R)-3-hydroxyacyl]-alpha-D-glucosamine + a (3R)-hydroxyacyl-[ACP] = a UDP-2-N,3-O-bis[(3R)-3-hydroxyacyl]-alpha-D-glucosamine + holo-[ACP] + H(+). The protein operates within bacterial outer membrane biogenesis; LPS lipid A biosynthesis. Catalyzes the N-acylation of UDP-3-O-acylglucosamine using 3-hydroxyacyl-ACP as the acyl donor. Is involved in the biosynthesis of lipid A, a phosphorylated glycolipid that anchors the lipopolysaccharide to the outer membrane of the cell. The sequence is that of UDP-3-O-acylglucosamine N-acyltransferase from Bartonella henselae (strain ATCC 49882 / DSM 28221 / CCUG 30454 / Houston 1) (Rochalimaea henselae).